The sequence spans 682 residues: MLSSITVRTKSGRLIPLVLAATLLAACSGRISTTPPAPVQSEATASADYYLQQMQQSSDDSKADWQLLAIRALLREGKLPQADDLLGQLPSQLTEAQQLEQRLVSAELEIARHAPQQAQAILSKLDISLLSQAQQLRYYQAVIAAVQGKTTLAQIRAYIALQPLLTQENQRKSNIDATWTALNTLTPADLNSMVINANEDILRGWLDLLRLYQDNRQDPALLKAAIKEWQTRYPNNPAATMLPSALDNILHLQSDSTASIALLLPLNGQAKVFSDAIEAGFNAAKNGAFNQNSAAVTTDGTPTAQVDAPAQPDVNAAGAVSTSTQSADATASVLPADSAALPPLDAAGDPIAPSVSPGNPDAHIQVYDTSSQPLPELLSQAQQAGVSLVIGPLLKNNVDQLNTISTPLNILALNQPEQVQNHPNICYFALSPEDEARDAARHIWAQGKRTPLLLIPRNPLGDRVAKAFATEWQSLGGGSVLRQTFGSSAELRSTINSGTGIRLTGQPVSITPAQPTSVTIAGLTIPAPVQPPVASGGGVDAVYIIATPAEITLIKPMIDLANGTHNGISLYASSRSYQAGAGPDFRLEMEGVQFSDIPLLAGSDPAILQQAPAQYRNDYSLMRLYAMGADAWTLANHFAQLRQIPGFQVQGATGTLSASDNCVIQRKLPWLQYQKGSIVPVL.

The N-terminal stretch at 1–26 (MLSSITVRTKSGRLIPLVLAATLLAA) is a signal peptide. A lipid anchor (N-palmitoyl cysteine) is attached at Cys27. Residue Cys27 is the site of S-diacylglycerol cysteine attachment.

Belongs to the LpoA family. Interacts with PBP1a.

Its subcellular location is the cell outer membrane. Functionally, regulator of peptidoglycan synthesis that is essential for the function of penicillin-binding protein 1A (PBP1a). The protein is Penicillin-binding protein activator LpoA of Edwardsiella ictaluri (strain 93-146).